A 236-amino-acid polypeptide reads, in one-letter code: Small ribosomal subunit protein uS3 (236 aa).

Residues 39-107 form the KH type-2 domain; sequence IRLYVLEELK…ETSLNIVEIH (69 aa).

Belongs to the universal ribosomal protein uS3 family. Part of the 30S ribosomal subunit. Forms a tight complex with proteins S10 and S14.

Functionally, binds the lower part of the 30S subunit head. Binds mRNA in the 70S ribosome, positioning it for translation. This is Small ribosomal subunit protein uS3 from Bartonella quintana (strain Toulouse) (Rochalimaea quintana).